The following is a 244-amino-acid chain: ATP synthase subunit a (244 aa).

The next 7 membrane-spanning stretches (helical) occupy residues 20-40 (FFDI…VIVI), 81-101 (GILF…LNVM), 113-133 (QLLV…IWGF), 140-160 (FLNI…LVFI), 176-196 (LFAN…AAIY), 202-222 (FIGI…LGIA), and 223-243 (FLQA…IINL).

This sequence belongs to the ATPase A chain family. F-type ATPases have 2 components, CF(1) - the catalytic core - and CF(0) - the membrane proton channel. CF(1) has five subunits: alpha(3), beta(3), gamma(1), delta(1), epsilon(1). CF(0) has three main subunits: a, b and c.

Its subcellular location is the mitochondrion inner membrane. Mitochondrial membrane ATP synthase (F(1)F(0) ATP synthase or Complex V) produces ATP from ADP in the presence of a proton gradient across the membrane which is generated by electron transport complexes of the respiratory chain. F-type ATPases consist of two structural domains, F(1) - containing the extramembraneous catalytic core and F(0) - containing the membrane proton channel, linked together by a central stalk and a peripheral stalk. During catalysis, ATP synthesis in the catalytic domain of F(1) is coupled via a rotary mechanism of the central stalk subunits to proton translocation. Key component of the proton channel; it may play a direct role in the translocation of protons across the membrane. This Dictyostelium discoideum (Social amoeba) protein is ATP synthase subunit a (atp6).